Consider the following 366-residue polypeptide: Mitogen-activated protein kinase 13 (366 aa).

Residues Y25–F308 enclose the Protein kinase domain. Position 31–39 (I31–V39) interacts with ATP. A Phosphoserine modification is found at S47. K54 lines the ATP pocket. D150 serves as the catalytic Proton acceptor. T180 bears the Phosphothreonine; by MAP2K3, MAP2K4, MAP2K6 and MAP2K7 mark. The short motif at T180 to Y182 is the TXY element. A Phosphotyrosine; by MAP2K3, MAP2K4, MAP2K6 and MAP2K7 modification is found at Y182. Residue S350 is modified to Phosphoserine.

The protein belongs to the protein kinase superfamily. CMGC Ser/Thr protein kinase family. MAP kinase subfamily. Interacts with MAPK8IP2. The cofactor is Mg(2+). Dually phosphorylated on Thr-180 and Tyr-182 by MAP2K3/MKK3, MAP2K4/MKK4, MAP2K6/MKK6 and MAP2K7/MKK7, which activates the enzyme. Dephosphorylated by dual specificity phosphatase DUSP1.

It catalyses the reaction L-seryl-[protein] + ATP = O-phospho-L-seryl-[protein] + ADP + H(+). It carries out the reaction L-threonyl-[protein] + ATP = O-phospho-L-threonyl-[protein] + ADP + H(+). Activated by phosphorylation on threonine and tyrosine by dual specificity kinases, MAP2K3/MKK3 MAP2K6/MKK6, MAP2K4/MKK4 and MAP2K7/MKK7. Activation by ultraviolet radiation, hyperosmotic shock, anisomycin or by TNF-alpha is mediated by MAP2K3/MKK3. Inhibited by dual specificity phosphatase DUSP1. Functionally, serine/threonine kinase which acts as an essential component of the MAP kinase signal transduction pathway. MAPK13 is one of the four p38 MAPKs which play an important role in the cascades of cellular responses evoked by extracellular stimuli such as pro-inflammatory cytokines or physical stress leading to direct activation of transcription factors such as ELK1 and ATF2. Accordingly, p38 MAPKs phosphorylate a broad range of proteins and it has been estimated that they may have approximately 200 to 300 substrates each. MAPK13 is one of the less studied p38 MAPK isoforms. Some of the targets are downstream kinases such as MAPKAPK2, which are activated through phosphorylation and further phosphorylate additional targets. Plays a role in the regulation of protein translation by phosphorylating and inactivating EEF2K. Involved in cytoskeletal remodeling through phosphorylation of MAPT and STMN1. Mediates UV irradiation induced up-regulation of the gene expression of CXCL14. Plays an important role in the regulation of epidermal keratinocyte differentiation, apoptosis and skin tumor development. Phosphorylates the transcriptional activator MYB in response to stress which leads to rapid MYB degradation via a proteasome-dependent pathway. MAPK13 also phosphorylates and down-regulates PRKD1 during regulation of insulin secretion in pancreatic beta cells. The protein is Mitogen-activated protein kinase 13 (MAPK13) of Bos taurus (Bovine).